Consider the following 358-residue polypeptide: Na(+)/H(+) exchange regulatory cofactor NHE-RF1 (358 aa).

The residue at position 2 (Ser-2) is an N-acetylserine. A phosphoserine mark is found at Ser-2 and Ser-46. The PDZ 1 domain maps to 14–94 (LCCLEKGPNG…AVRLLVVDPD (81 aa)). Positions 114–134 (QAGPEQAGPPAAPGEQGPAGE) are enriched in low complexity. Positions 114–151 (QAGPEQAGPPAAPGEQGPAGENEPREVEKSHPERRELR) are disordered. The span at 135–151 (NEPREVEKSHPERRELR) shows a compositional bias: basic and acidic residues. Positions 154–234 (LCAMKKGPNG…EAKLLVVDKE (81 aa)) constitute a PDZ 2 domain. The disordered stretch occupies residues 247–358 (SSEHLNGPLP…SEKKELFSNL (112 aa)). Residues 272-290 (LAPAASESPRPALARSASS) are compositionally biased toward low complexity. 3 positions are modified to phosphoserine: Ser-279, Ser-289, and Ser-290. Thr-292 is modified (phosphothreonine). 3 positions are modified to phosphoserine: Ser-293, Ser-298, and Ser-301. Residues 308 to 327 (TAPSSTSSSSDPILDFSISL) are compositionally biased toward low complexity. The span at 348–358 (WSEKKELFSNL) shows a compositional bias: basic and acidic residues.

Homodimer, and heterodimer with NHERF2. Binds the N-termini of EZR, RDX and MSN. Binds the C-termini of PDGFRA, PDGFRB, ADRB2, NOS2 and CFTR. Binds ARHGAP17, EPI64, RACK1, OPRK1, GNAQ, CTNNB1 and PLCB3. Binds PDZK1. Interacts with CLCN3. Binds the C-terminus of PAG1. In resting T-cells, part of a PAG1-NHERF1-MSN complex which is disrupted upon TCR activation. Forms a complex with CFTR and SLC4A7. Forms a complex with SLC4A7 and ATP6V1B1. Interacts with TRPC4 (via the PDZ-binding domain). Directly interacts with HTR4. Interacts (via the PDZ 1 domain) with PODXL (via the C-terminal PDZ-binding motif DTHL); interaction is not detected in glomerular epithelium cells. Interacts (via the PDZ 1 domain) with PODXL (via the C-terminal PDZ-binding motif DTHL); the interaction take place early in the secretory pathway and is necessary for its apical membrane sorting. Interacts with SLC26A3. Interacts with MCC. Interacts with SLC34A1. Interacts (via the PDZ domains) with SLC26A6 isoform 4 and isoform 5. Interacts (via PDZ domains) with ACE2 (via PDZ-binding motif); the interaction may enhance ACE2 membrane residence. Post-translationally, phosphorylated on serine residues. In terms of tissue distribution, detected in ileum, duodenum and in kidney, where it is found in the glomerulus, the proximal tubule, the thick ascending limb of Henle's loop and the cortical collecting duct.

The protein localises to the cytoplasm. Its subcellular location is the apical cell membrane. It is found in the cell projection. The protein resides in the filopodium. It localises to the ruffle. The protein localises to the microvillus. Its subcellular location is the endomembrane system. Functionally, scaffold protein that connects plasma membrane proteins with members of the ezrin/moesin/radixin family and thereby helps to link them to the actin cytoskeleton and to regulate their surface expression. Necessary for recycling of internalized ADRB2. Was first known to play a role in the regulation of the activity and subcellular location of SLC9A3. Necessary for cAMP-mediated phosphorylation and inhibition of SLC9A3. Involved in sperm capacitation. May participate in the regulation of the chloride and bicarbonate homeostasis in spermatozoa. May enhance Wnt signaling. May participate in HTR4 targeting to microvilli. Involved in the regulation of phosphate reabsorption in the renal proximal tubules. This is Na(+)/H(+) exchange regulatory cofactor NHE-RF1 (NHERF1) from Oryctolagus cuniculus (Rabbit).